We begin with the raw amino-acid sequence, 159 residues long: Large ribosomal subunit protein uL15 (159 aa).

The disordered stretch occupies residues Ala14–Ala44. The segment covering Arg23–Asn35 has biased composition (gly residues).

The protein belongs to the universal ribosomal protein uL15 family. As to quaternary structure, part of the 50S ribosomal subunit.

Binds to the 23S rRNA. In Solidesulfovibrio magneticus (strain ATCC 700980 / DSM 13731 / RS-1) (Desulfovibrio magneticus), this protein is Large ribosomal subunit protein uL15.